The chain runs to 94 residues: UPF0235 protein Dred_0717 (94 aa).

It belongs to the UPF0235 family.

The polypeptide is UPF0235 protein Dred_0717 (Desulforamulus reducens (strain ATCC BAA-1160 / DSM 100696 / MI-1) (Desulfotomaculum reducens)).